Here is a 103-residue protein sequence, read N- to C-terminus: Pyrimidine/purine nucleoside phosphorylase (103 aa).

This sequence belongs to the nucleoside phosphorylase PpnP family.

It carries out the reaction a purine D-ribonucleoside + phosphate = a purine nucleobase + alpha-D-ribose 1-phosphate. The catalysed reaction is adenosine + phosphate = alpha-D-ribose 1-phosphate + adenine. It catalyses the reaction cytidine + phosphate = cytosine + alpha-D-ribose 1-phosphate. The enzyme catalyses guanosine + phosphate = alpha-D-ribose 1-phosphate + guanine. It carries out the reaction inosine + phosphate = alpha-D-ribose 1-phosphate + hypoxanthine. The catalysed reaction is thymidine + phosphate = 2-deoxy-alpha-D-ribose 1-phosphate + thymine. It catalyses the reaction uridine + phosphate = alpha-D-ribose 1-phosphate + uracil. The enzyme catalyses xanthosine + phosphate = alpha-D-ribose 1-phosphate + xanthine. Its function is as follows. Catalyzes the phosphorolysis of diverse nucleosides, yielding D-ribose 1-phosphate and the respective free bases. Can use uridine, adenosine, guanosine, cytidine, thymidine, inosine and xanthosine as substrates. Also catalyzes the reverse reactions. This is Pyrimidine/purine nucleoside phosphorylase from Nocardia farcinica (strain IFM 10152).